A 467-amino-acid chain; its full sequence is ATP synthase subunit beta (467 aa).

152–159 (GGAGVGKT) is an ATP binding site.

It belongs to the ATPase alpha/beta chains family. In terms of assembly, F-type ATPases have 2 components, CF(1) - the catalytic core - and CF(0) - the membrane proton channel. CF(1) has five subunits: alpha(3), beta(3), gamma(1), delta(1), epsilon(1). CF(0) has three main subunits: a(1), b(2) and c(9-12). The alpha and beta chains form an alternating ring which encloses part of the gamma chain. CF(1) is attached to CF(0) by a central stalk formed by the gamma and epsilon chains, while a peripheral stalk is formed by the delta and b chains.

It is found in the cell inner membrane. The enzyme catalyses ATP + H2O + 4 H(+)(in) = ADP + phosphate + 5 H(+)(out). Produces ATP from ADP in the presence of a proton gradient across the membrane. The catalytic sites are hosted primarily by the beta subunits. The chain is ATP synthase subunit beta from Wolinella succinogenes (strain ATCC 29543 / DSM 1740 / CCUG 13145 / JCM 31913 / LMG 7466 / NCTC 11488 / FDC 602W) (Vibrio succinogenes).